The primary structure comprises 650 residues: GATA zinc finger domain-containing protein 11 (650 aa).

Low complexity predominate over residues Leu-16–Phe-79. Disordered stretches follow at residues Leu-16 to Asn-96, Lys-111 to Leu-181, Asn-221 to Lys-335, and Arg-409 to Lys-515. Residues Leu-116–Thr-129 show a composition bias toward polar residues. 2 stretches are compositionally biased toward low complexity: residues Asn-130 to Pro-180 and Asn-221 to Asn-260. Polar residues predominate over residues Gln-261–Ser-272. Residues Thr-273–Asn-334 are compositionally biased toward low complexity. Over residues Arg-425–Val-434 the composition is skewed to basic residues. The span at His-442–Asn-511 shows a compositional bias: low complexity. The GATA-type zinc-finger motif lies at Cys-522–Cys-547. A disordered region spans residues Gln-619–His-650.

Transcription factor that regulates morphogenetic cell movement during development. The chain is GATA zinc finger domain-containing protein 11 (gtaK) from Dictyostelium discoideum (Social amoeba).